We begin with the raw amino-acid sequence, 206 residues long: ATP phosphoribosyltransferase (206 aa).

This sequence belongs to the ATP phosphoribosyltransferase family. Short subfamily. As to quaternary structure, heteromultimer composed of HisG and HisZ subunits.

It localises to the cytoplasm. It carries out the reaction 1-(5-phospho-beta-D-ribosyl)-ATP + diphosphate = 5-phospho-alpha-D-ribose 1-diphosphate + ATP. Its pathway is amino-acid biosynthesis; L-histidine biosynthesis; L-histidine from 5-phospho-alpha-D-ribose 1-diphosphate: step 1/9. Its function is as follows. Catalyzes the condensation of ATP and 5-phosphoribose 1-diphosphate to form N'-(5'-phosphoribosyl)-ATP (PR-ATP). Has a crucial role in the pathway because the rate of histidine biosynthesis seems to be controlled primarily by regulation of HisG enzymatic activity. In Geobacillus sp. (strain WCH70), this protein is ATP phosphoribosyltransferase.